Here is a 236-residue protein sequence, read N- to C-terminus: Aminopyrimidine aminohydrolase (236 aa).

Residue aspartate 44 coordinates substrate. Cysteine 135 serves as the catalytic Nucleophile. Positions 139 and 163 each coordinate substrate. Glutamate 205 (proton donor) is an active-site residue.

The protein belongs to the TenA family. Homotetramer.

The enzyme catalyses 4-amino-5-aminomethyl-2-methylpyrimidine + H2O = 4-amino-5-hydroxymethyl-2-methylpyrimidine + NH4(+). The catalysed reaction is thiamine + H2O = 5-(2-hydroxyethyl)-4-methylthiazole + 4-amino-5-hydroxymethyl-2-methylpyrimidine + H(+). Its pathway is cofactor biosynthesis; thiamine diphosphate biosynthesis. Functionally, catalyzes an amino-pyrimidine hydrolysis reaction at the C5' of the pyrimidine moiety of thiamine compounds, a reaction that is part of a thiamine salvage pathway. Thus, catalyzes the conversion of 4-amino-5-aminomethyl-2-methylpyrimidine to 4-amino-5-hydroxymethyl-2-methylpyrimidine (HMP). To a lesser extent, is also able to catalyze the hydrolytic cleavage of thiamine; however, this thiaminase activity is unlikely to be physiologically relevant. Therefore, is involved in the regeneration of the thiamine pyrimidine from thiamine degraded products present in the environment, rather than in thiamine degradation. In Bacillus subtilis (strain 168), this protein is Aminopyrimidine aminohydrolase.